The primary structure comprises 223 residues: ATP-dependent Clp protease proteolytic subunit 2 (223 aa).

Ser118 serves as the catalytic Nucleophile. The active site involves His143.

The protein belongs to the peptidase S14 family. As to quaternary structure, fourteen ClpP subunits assemble into 2 heptameric rings which stack back to back to give a disk-like structure with a central cavity, resembling the structure of eukaryotic proteasomes.

Its subcellular location is the cytoplasm. It carries out the reaction Hydrolysis of proteins to small peptides in the presence of ATP and magnesium. alpha-casein is the usual test substrate. In the absence of ATP, only oligopeptides shorter than five residues are hydrolyzed (such as succinyl-Leu-Tyr-|-NHMec, and Leu-Tyr-Leu-|-Tyr-Trp, in which cleavage of the -Tyr-|-Leu- and -Tyr-|-Trp bonds also occurs).. In terms of biological role, cleaves peptides in various proteins in a process that requires ATP hydrolysis. Has a chymotrypsin-like activity. Plays a major role in the degradation of misfolded proteins. This Leifsonia xyli subsp. xyli (strain CTCB07) protein is ATP-dependent Clp protease proteolytic subunit 2.